Here is a 77-residue protein sequence, read N- to C-terminus: Mu-conotoxin BuIIIA (77 aa).

The signal sequence occupies residues Met-1–Pro-22. Residues Gln-23–Arg-51 constitute a propeptide that is removed on maturation. The segment at Asp-26–Ser-46 is disordered. Residues Pro-28–Asp-38 are compositionally biased toward basic and acidic residues. 3 cysteine pairs are disulfide-bonded: Cys-56-Cys-67, Cys-57-Cys-73, and Cys-63-Cys-74. Cys-74 carries the cysteine amide modification.

The protein belongs to the conotoxin M superfamily. In terms of tissue distribution, expressed by the venom duct.

Its subcellular location is the secreted. Functionally, mu-conotoxins block voltage-gated sodium channels (Nav). This synthetic toxin potently blocks rNav1.2/SCN2A, and rNav1.4/SCN4A. It also moderately blocks rNav1.1/SCN1A, rNav1.3/SCN3A, rNav1.5/SCN5A, and mNav1.6/SCN8A. The inhibition is reversible. The polypeptide is Mu-conotoxin BuIIIA (Conus bullatus (Bubble cone)).